A 95-amino-acid polypeptide reads, in one-letter code: Secreted RxLR effector protein 20 (95 aa).

A signal peptide spans 1–20; the sequence is MQSPYIILFALVTLLGSISG. The RxLR motif lies at 47–50; sequence RLLR.

The protein belongs to the RxLR effector family.

It localises to the secreted. The protein localises to the host nucleus. Its subcellular location is the host cytoplasm. Its function is as follows. Secreted effector that partially suppresses the host cell death induced by cell death-inducing proteins. In Plasmopara viticola (Downy mildew of grapevine), this protein is Secreted RxLR effector protein 20.